Consider the following 149-residue polypeptide: MAHIFVYGTLKRGQPNHKVMLDQSHGLATFRGRGCTVESFPLVIAGEHNIPWLLHLPGKGHCVAGEIYEVDEQMLRFLDDFEGCPSMYQRTALQVRVLEWEGAGGPGDSVQCFVYSTATYAPEWLFLPYHKNYDSEGPHGLRYNPRENR.

7-10 (YGTL) provides a ligand contact to substrate. E82 serves as the catalytic Proton acceptor.

It belongs to the gamma-glutamylcyclotransferase family. In terms of assembly, monomer.

The enzyme catalyses epsilon-(gamma-L-glutamyl)-L-lysine = 5-oxo-L-proline + L-lysine. Functionally, contributes to degradation of proteins cross-linked by transglutaminases by degrading the cross-link between a lysine and a glutamic acid residue. Catalyzes the formation of 5-oxo-L-proline from L-gamma-glutamyl-L-epsilon-lysine. Inactive with L-gamma-glutamyl-alpha-amino acid substrates such as L-gamma-glutamyl-L-alpha-cysteine and L-gamma-glutamyl-L-alpha-alanine. This chain is Gamma-glutamylaminecyclotransferase (Ggact), found in Rattus norvegicus (Rat).